Here is a 94-residue protein sequence, read N- to C-terminus: Large ribosomal subunit protein bL25 (94 aa).

It belongs to the bacterial ribosomal protein bL25 family. In terms of assembly, part of the 50S ribosomal subunit; part of the 5S rRNA/L5/L18/L25 subcomplex. Contacts the 5S rRNA. Binds to the 5S rRNA independently of L5 and L18.

Its function is as follows. This is one of the proteins that binds to the 5S RNA in the ribosome where it forms part of the central protuberance. The chain is Large ribosomal subunit protein bL25 from Erwinia tasmaniensis (strain DSM 17950 / CFBP 7177 / CIP 109463 / NCPPB 4357 / Et1/99).